The primary structure comprises 209 residues: MADS-box transcription factor 2 (209 aa).

The region spanning 1 to 61 (MGRGKIEIKR…GKLYDYCSPK (61 aa)) is the MADS-box domain. Residues 84–170 (HKSLSAEIDR…AFKLHQQDIA (87 aa)) enclose the K-box domain.

Highly expressed in anthers and carpels. Expressed in pollen, tapetum and stigma.

The protein resides in the nucleus. In terms of biological role, probable transcription factor involved in the development of floral organs. B-class protein required for normal development of lodicules (whorl 2). This is MADS-box transcription factor 2 (MADS2) from Oryza sativa subsp. japonica (Rice).